Here is a 214-residue protein sequence, read N- to C-terminus: Protein FAM167A (214 aa).

2 disordered regions span residues 1 to 26 (MSVP…PDDH) and 59 to 108 (PFPR…LSTG). Residues 118–156 (EAIAWLRKELTEMRLQDQQLARQLMRLRGDINKLKIEHT) are a coiled coil.

The protein belongs to the FAM167 (SEC) family. In terms of tissue distribution, expressed in skin, including primary keratinocytes, spleen, kidney, leukocytes, testis, lung, small intestine and prostate.

In Homo sapiens (Human), this protein is Protein FAM167A (FAM167A).